The primary structure comprises 243 residues: Orotidine 5'-phosphate decarboxylase (243 aa).

Substrate contacts are provided by residues D18, K39, 66 to 75 (DLKFHDIPAT), T130, R192, Q201, G221, and R222. The active-site Proton donor is K68.

It belongs to the OMP decarboxylase family. Type 1 subfamily. In terms of assembly, homodimer.

The catalysed reaction is orotidine 5'-phosphate + H(+) = UMP + CO2. It participates in pyrimidine metabolism; UMP biosynthesis via de novo pathway; UMP from orotate: step 2/2. In terms of biological role, catalyzes the decarboxylation of orotidine 5'-monophosphate (OMP) to uridine 5'-monophosphate (UMP). In Synechococcus sp. (strain WH7803), this protein is Orotidine 5'-phosphate decarboxylase.